A 1855-amino-acid polypeptide reads, in one-letter code: Chitin synthase 5 (1855 aa).

The 778-residue stretch at 1 to 778 folds into the Myosin motor domain; it reads MSSAPTTQQN…CWRQIVRAGD (778 aa). 95–102 contributes to the ATP binding site; sequence GESGTGKT. N-linked (GlcNAc...) asparagine glycans are attached at residues Asn-221, Asn-520, and Asn-558. Positions 585-650 are disordered; it reads AVQQASVASK…PKSADTQQGA (66 aa). An actin-binding region spans residues 658–682; that stretch reads LDNINKSLTAPNTNPYFFFCLKPND. Asn-662 carries N-linked (GlcNAc...) asparagine glycosylation. 2 consecutive transmembrane segments (helical) span residues 887–907 and 922–942; these read WLVL…RIIG and VAIN…MVGF. In terms of domain architecture, Cytochrome b5 heme-binding spans 950-1008; it reads QHVFSPSELTSYDGKNSDAYVAIRGNVFDLGAFIPQHYPSIVPASALEKYAGTDATNLF. Asn-1037 and Asn-1061 each carry an N-linked (GlcNAc...) asparagine glycan. The helical transmembrane segment at 1199-1219 threads the bilayer; the sequence is ILLAVSIMLVSVICFKFLAAL. Asn-1422, Asn-1456, and Asn-1562 each carry an N-linked (GlcNAc...) asparagine glycan. Helical transmembrane passes span 1587 to 1607, 1621 to 1641, and 1650 to 1670; these read FVVF…GYIV, ATTA…IFIV, and WMII…LIAF. N-linked (GlcNAc...) asparagine glycans are attached at residues Asn-1755 and Asn-1767. In terms of domain architecture, DEK-C spans 1797-1852; that stretch reads MPNDDAILAEIREILATADLMTVTKKSIKAELERRFGVPMDSRRQYIGSATEAILS.

In the N-terminal section; belongs to the TRAFAC class myosin-kinesin ATPase superfamily. Myosin family. The protein in the C-terminal section; belongs to the chitin synthase family. Class V subfamily.

It localises to the apical cell membrane. It is found in the cell septum. The protein resides in the cell tip. It catalyses the reaction [(1-&gt;4)-N-acetyl-beta-D-glucosaminyl](n) + UDP-N-acetyl-alpha-D-glucosamine = [(1-&gt;4)-N-acetyl-beta-D-glucosaminyl](n+1) + UDP + H(+). In terms of biological role, polymerizes chitin, a structural polymer of the cell wall and septum, by transferring the sugar moiety of UDP-GlcNAc to the non-reducing end of the growing chitin polymer. This chain is Chitin synthase 5, found in Zymoseptoria tritici (strain CBS 115943 / IPO323) (Speckled leaf blotch fungus).